Here is a 393-residue protein sequence, read N- to C-terminus: Nuclear hormone receptor family member nhr-90 (393 aa).

Positions 6–79 (LQTCKICGAE…AGMKIEYFQH (74 aa)) form a DNA-binding region, nuclear receptor. The segment at 9–30 (CKICGAENTRGNHFGVQCCRAC) adopts an NR C4-type zinc-finger fold. An NR C4-type; degenerate zinc finger spans residues 47–62 (CLSVHCGEAARFCKPC). The 268-residue stretch at 121–388 (DLNSLVGKAS…FSHPEMFIDT (268 aa)) folds into the NR LBD domain.

It belongs to the nuclear hormone receptor family.

The protein localises to the nucleus. Functionally, orphan nuclear receptor. This Caenorhabditis elegans protein is Nuclear hormone receptor family member nhr-90 (nhr-90).